A 101-amino-acid chain; its full sequence is Small ribosomal subunit protein uS14 (101 aa).

Belongs to the universal ribosomal protein uS14 family. As to quaternary structure, part of the 30S ribosomal subunit. Contacts proteins S3 and S10.

Its function is as follows. Binds 16S rRNA, required for the assembly of 30S particles and may also be responsible for determining the conformation of the 16S rRNA at the A site. This Chromobacterium violaceum (strain ATCC 12472 / DSM 30191 / JCM 1249 / CCUG 213 / NBRC 12614 / NCIMB 9131 / NCTC 9757 / MK) protein is Small ribosomal subunit protein uS14.